The primary structure comprises 351 residues: MKRNLLSSAIIVAIMSLGLTGCDDKKAETETLPPANSQPAAPAPEAKPTEAPVAKAEAKPETPAQPVVDEQAVFDEKMDVYIKCYNKLQIPVQRSLARYADWLKDFKQGPTGEERTVYGIYGISESNLAECEKGVKSAVALTPALQPIDGVAVSYIDAAVALGNTINEMDKYYTQENYKDDAFAKGKTLHQTFLKNLEAFEPVAESYHAAIQEINDKRQLAELKNIEEREGKTFHYYSLAVMISAKQINNLISQDKFDAEAAMKKVSELETLVAQAKEADKGGMNFSFINSAGQYQLEAKKYVRRIRDKVPYSDWDKEQLQDANSSWMVEDSFPRALREYNEMVDDYNSLR.

Residues 25-67 (KKAETETLPPANSQPAAPAPEAKPTEAPVAKAEAKPETPAQPV) form a disordered region. Residues 33–55 (PPANSQPAAPAPEAKPTEAPVAK) are compositionally biased toward low complexity.

This is an uncharacterized protein from Escherichia coli (strain K12).